Here is a 494-residue protein sequence, read N- to C-terminus: Tripartite motif-containing protein 5 (494 aa).

Residue Ala-2 is modified to N-acetylalanine. The segment at 15 to 59 (CPICLELLTEPLSLDCGHSFCQACITANHKKSMLHQGERSCPLCR) adopts an RING-type zinc-finger fold. Residue Ser-86 is modified to Phosphoserine. The B box-type zinc-finger motif lies at 91 to 132 (QKVDHCARHGEKLLLFCQQDGNVICWLCERSQEHRGHHTLLV). Zn(2+) contacts are provided by Cys-96, His-99, Cys-118, and His-124. Positions 132–222 (VEEVAQTYRE…KRLTQSENDM (91 aa)) form a coiled coil. The interval 186–199 (FKQLRDILDCEESN) is required for interaction with GABARAP and for autophagy. The B30.2/SPRY domain occupies 280 to 494 (PDLKGMLQVF…LPMTLCSPRS (215 aa)).

It belongs to the TRIM/RBCC family. Can form homodimers and homotrimers. In addition to lower-order dimerization, also exhibits a higher-order multimerization and both low- and high-order multimerizations are essential for its restriction activity. Interacts with BTBD1 and BTBD2. Interacts with PSMC4, PSMC5, PSMD7 and HSPA8/HSC70. Interacts (via B30.2/SPRY domain) with HSPA1A/B. Interacts with PSMC2, MAP3K7/TAK1, TAB2 and TAB3. Interacts with SQSTM1. Interacts with TRIM6 and TRIM34. Interacts with ULK1 (phosphorylated form), GABARAP, GABARAPL1, GABARAPL2, MAP1LC3A, MAP1LC3C and BECN1. In terms of processing, degraded in a proteasome-independent fashion in the absence of viral infection but in a proteasome-dependent fashion following exposure to restriction sensitive virus. Autoubiquitinated in a RING finger- and UBE2D2-dependent manner. Monoubiquitinated by TRIM21. Deubiquitinated by Yersinia YopJ. Ubiquitination may not lead to proteasomal degradation.

It is found in the cytoplasm. Its subcellular location is the nucleus. The enzyme catalyses S-ubiquitinyl-[E2 ubiquitin-conjugating enzyme]-L-cysteine + [acceptor protein]-L-lysine = [E2 ubiquitin-conjugating enzyme]-L-cysteine + N(6)-ubiquitinyl-[acceptor protein]-L-lysine.. It participates in protein modification; protein ubiquitination. In terms of biological role, capsid-specific restriction factor that prevents infection from non-host-adapted retroviruses. Blocks viral replication early in the life cycle, after viral entry but before reverse transcription. In addition to acting as a capsid-specific restriction factor, also acts as a pattern recognition receptor that activates innate immune signaling in response to the retroviral capsid lattice. Binding to the viral capsid triggers its E3 ubiquitin ligase activity, and in concert with the heterodimeric ubiquitin conjugating enzyme complex UBE2V1-UBE2N (also known as UBC13-UEV1A complex) generates 'Lys-63'-linked polyubiquitin chains, which in turn are catalysts in the autophosphorylation of the MAP3K7/TAK1 complex (includes TAK1, TAB2, and TAB3). Activation of the MAP3K7/TAK1 complex by autophosphorylation results in the induction and expression of NF-kappa-B and MAPK-responsive inflammatory genes, thereby leading to an innate immune response in the infected cell. Plays a role in regulating autophagy through activation of autophagy regulator BECN1 by causing its dissociation from its inhibitors BCL2 and TAB2. This chain is Tripartite motif-containing protein 5 (TRIM5), found in Pithecia pithecia (White-faced saki).